Consider the following 187-residue polypeptide: MSGGREIALLGGSFNPPHVAHLMAAWWALATQGVSEVWLLPAFRHPFGKELAPFEDRLEMCRLAARALRGVHVCGAEAELAGDPLVGKTARTLEHLAAKHPTYRFALVVGADILAETAKWYRWDRVQELARIIVVGRQGHPPVPGAPDLPAISSTEIRARLARGEDVRGLVPDRVLRYVEAQRLYRG.

It belongs to the NadD family.

It carries out the reaction nicotinate beta-D-ribonucleotide + ATP + H(+) = deamido-NAD(+) + diphosphate. It participates in cofactor biosynthesis; NAD(+) biosynthesis; deamido-NAD(+) from nicotinate D-ribonucleotide: step 1/1. Its function is as follows. Catalyzes the reversible adenylation of nicotinate mononucleotide (NaMN) to nicotinic acid adenine dinucleotide (NaAD). The protein is Probable nicotinate-nucleotide adenylyltransferase of Anaeromyxobacter dehalogenans (strain 2CP-C).